The primary structure comprises 244 residues: LOB domain-containing protein 17 (244 aa).

One can recognise an LOB domain in the interval 6 to 108; it reads SPCGACKFLR…TQLEILKQQA (103 aa).

This sequence belongs to the LOB domain-containing protein family. As to expression, expressed in roots, stems, leaves and flowers.

This chain is LOB domain-containing protein 17 (LBD17), found in Arabidopsis thaliana (Mouse-ear cress).